Here is a 572-residue protein sequence, read N- to C-terminus: Chaperonin CPN60-like 2, mitochondrial (572 aa).

The N-terminal 31 residues, 1–31, are a transit peptide targeting the mitochondrion; it reads MYRVLSKLSSSIGSSTSRKLVSGRIISSRNY.

It belongs to the chaperonin (HSP60) family.

The protein localises to the mitochondrion. Functionally, implicated in mitochondrial protein import and macromolecular assembly. May facilitate the correct folding of imported proteins. May also prevent misfolding and promote the refolding and proper assembly of unfolded polypeptides generated under stress conditions in the mitochondrial matrix. In Arabidopsis thaliana (Mouse-ear cress), this protein is Chaperonin CPN60-like 2, mitochondrial.